A 494-amino-acid chain; its full sequence is Glycerol kinase (494 aa).

ADP is bound at residue threonine 13. ATP contacts are provided by threonine 13, threonine 14, and serine 15. Threonine 13 contributes to the sn-glycerol 3-phosphate binding site. ADP is bound at residue arginine 17. Sn-glycerol 3-phosphate is bound by residues arginine 83, glutamate 84, tyrosine 135, and aspartate 244. Glycerol contacts are provided by arginine 83, glutamate 84, tyrosine 135, aspartate 244, and glutamine 245. Residues threonine 266 and glycine 309 each coordinate ADP. ATP contacts are provided by threonine 266, glycine 309, glutamine 313, and glycine 410. The ADP site is built by glycine 410 and asparagine 414.

This sequence belongs to the FGGY kinase family.

The enzyme catalyses glycerol + ATP = sn-glycerol 3-phosphate + ADP + H(+). It participates in polyol metabolism; glycerol degradation via glycerol kinase pathway; sn-glycerol 3-phosphate from glycerol: step 1/1. Its activity is regulated as follows. Inhibited by fructose 1,6-bisphosphate (FBP). Functionally, key enzyme in the regulation of glycerol uptake and metabolism. Catalyzes the phosphorylation of glycerol to yield sn-glycerol 3-phosphate. This is Glycerol kinase from Shewanella putrefaciens (strain CN-32 / ATCC BAA-453).